The primary structure comprises 221 residues: GTP cyclohydrolase 1 (221 aa).

3 residues coordinate Zn(2+): C109, H112, and C180.

This sequence belongs to the GTP cyclohydrolase I family. As to quaternary structure, toroid-shaped homodecamer, composed of two pentamers of five dimers.

The enzyme catalyses GTP + H2O = 7,8-dihydroneopterin 3'-triphosphate + formate + H(+). Its pathway is cofactor biosynthesis; 7,8-dihydroneopterin triphosphate biosynthesis; 7,8-dihydroneopterin triphosphate from GTP: step 1/1. This Sodalis glossinidius (strain morsitans) protein is GTP cyclohydrolase 1.